Here is a 644-residue protein sequence, read N- to C-terminus: Arginine--tRNA ligase (644 aa).

Residues 134 to 144 carry the 'HIGH' region motif; sequence VNPTKPLHMGH.

This sequence belongs to the class-I aminoacyl-tRNA synthetase family.

It is found in the cytoplasm. It catalyses the reaction tRNA(Arg) + L-arginine + ATP = L-arginyl-tRNA(Arg) + AMP + diphosphate. The sequence is that of Arginine--tRNA ligase from Thermococcus sibiricus (strain DSM 12597 / MM 739).